Reading from the N-terminus, the 489-residue chain is MSVYGLQRLYIGGGYVDATSGKTFDTFDPATGELLAQVQQASAADVDRAVASAREGQREWAAMTAMQRSRILRRAVDLLRERNDELAAIETRDTGKPIGETLAVDIVTGADVIEYYAGLATAIEGLQVPLRAESFVYTRREPLGVCAGIGAWNYPIQIACWKTAPALAAGNAMVFKPSEVTPLTALKLAEIYTEAGVPAGVFNVVQGDGSVGALLTGHPDIAKVSFTGGVETGKKVMSLAGASSLKEVTMELGGKSPLIVFEDADLDRAADIAVTANFFSSGQVCTNGTRVFVHRSVKDAFTQRVLERVKRIRVGKPTDAATNFGPLVSAAQLDKVLGFIDSGKAEGAKLLAGGTRLTDGHFASGQYVAPTVFGDCRDDMKIVREEIFGPVMSILDFESEDEVIARANDTHYGLAAGVVTENLSRAHRTIHRLEAGICWINTWGESPAEMPVGGYKQSGVGRENGITTLEHYTRIKSVQVELGRYNPVF.

Residues Thr26 and Asp93 each contribute to the K(+) site. Residue 150–152 participates in NAD(+) binding; it reads GAW. The active-site Charge relay system is Lys162. 176–179 is a binding site for NAD(+); the sequence is KPSE. Val180 contributes to the K(+) binding site. Residue 229–232 participates in NAD(+) binding; the sequence is GVET. Leu245 is a binding site for K(+). The active-site Proton acceptor is the Glu251. 3 residues coordinate NAD(+): Gly253, Cys285, and Glu386. The Nucleophile role is filled by Cys285. Cys285 is subject to Cysteine sulfenic acid (-SOH). K(+)-binding residues include Lys456 and Gly459. Glu463 (charge relay system) is an active-site residue.

It belongs to the aldehyde dehydrogenase family. As to quaternary structure, dimer of dimers. K(+) is required as a cofactor.

The catalysed reaction is betaine aldehyde + NAD(+) + H2O = glycine betaine + NADH + 2 H(+). It functions in the pathway amine and polyamine biosynthesis; betaine biosynthesis via choline pathway; betaine from betaine aldehyde: step 1/1. Its function is as follows. Involved in the biosynthesis of the osmoprotectant glycine betaine. Catalyzes the irreversible oxidation of betaine aldehyde to the corresponding acid. The sequence is that of Betaine aldehyde dehydrogenase from Burkholderia ambifaria (strain ATCC BAA-244 / DSM 16087 / CCUG 44356 / LMG 19182 / AMMD) (Burkholderia cepacia (strain AMMD)).